A 620-amino-acid polypeptide reads, in one-letter code: Threonine--tRNA ligase (620 aa).

The tract at residues 1-141 (MKMLLIHSDY…LSRKIVAKEE (141 aa)) is editing domain. The catalytic stretch occupies residues 197-496 (PHVKFIKEKD…AEKGNAPMLP (300 aa)). Residues Cys289, His341, and His465 each coordinate Zn(2+).

This sequence belongs to the class-II aminoacyl-tRNA synthetase family. Homodimer. It depends on Zn(2+) as a cofactor.

The protein resides in the cytoplasm. The enzyme catalyses tRNA(Thr) + L-threonine + ATP = L-threonyl-tRNA(Thr) + AMP + diphosphate + H(+). Its activity is regulated as follows. Not inhibited by 1 uM borrelidin (BN); probably does not bind BN. In terms of biological role, catalyzes the attachment of threonine to tRNA(Thr) in a two-step reaction: L-threonine is first activated by ATP to form Thr-AMP and then transferred to the acceptor end of tRNA(Thr). Also activates L-serine, but does not detectably transfer it to tRNA(Thr). Edits incorrectly charged L-seryl-tRNA(Thr) via its editing domain. Has no activity on correctly acylated L-seryl-tRNA(Ser) or L-threonyl-tRNA(Thr). Deacylates correctly charged glycyl-tRNA(Gly), but not glycyl-tRNA(Gly)(2'-dA76) (the terminal 2'-OH of tRNA adenine 76 has been dehydroxylated) nor the 2'-fluoro tRNA derivative, strongly suggesting the editing function is tRNA catalyzed. This chain is Threonine--tRNA ligase, found in Methanocaldococcus jannaschii (strain ATCC 43067 / DSM 2661 / JAL-1 / JCM 10045 / NBRC 100440) (Methanococcus jannaschii).